The primary structure comprises 554 residues: NADH-quinone oxidoreductase subunit N 3 (554 aa).

14 consecutive transmembrane segments (helical) span residues 35 to 55 (LMPV…EAFV), 65 to 85 (LFLT…LAAG), 105 to 125 (PTLF…FTFA), 161 to 181 (GFTT…LLVF), 187 to 207 (LLTL…LCAV), 222 to 242 (YFLL…LLYG), 275 to 295 (ALLL…VGAV), 322 to 342 (VAAF…LAWD), 345 to 365 (PVMW…AITQ), 371 to 391 (LLAY…IAAS), 398 to 418 (VLFY…VVTL), 442 to 462 (VAAV…TSGF), 476 to 496 (GAGA…FFYI), and 525 to 545 (IAVG…FLDL).

It belongs to the complex I subunit 2 family. In terms of assembly, NDH-1 is composed of 14 different subunits. Subunits NuoA, H, J, K, L, M, N constitute the membrane sector of the complex.

The protein localises to the cell membrane. It catalyses the reaction a quinone + NADH + 5 H(+)(in) = a quinol + NAD(+) + 4 H(+)(out). Its function is as follows. NDH-1 shuttles electrons from NADH, via FMN and iron-sulfur (Fe-S) centers, to quinones in the respiratory chain. The immediate electron acceptor for the enzyme in this species is believed to be a menaquinone. Couples the redox reaction to proton translocation (for every two electrons transferred, four hydrogen ions are translocated across the cytoplasmic membrane), and thus conserves the redox energy in a proton gradient. In Streptomyces griseus subsp. griseus (strain JCM 4626 / CBS 651.72 / NBRC 13350 / KCC S-0626 / ISP 5235), this protein is NADH-quinone oxidoreductase subunit N 3.